Reading from the N-terminus, the 212-residue chain is Large ribosomal subunit protein uL1 (212 aa).

Belongs to the universal ribosomal protein uL1 family. In terms of assembly, part of the 50S ribosomal subunit.

In terms of biological role, binds directly to 23S rRNA. Probably involved in E site tRNA release. Its function is as follows. Protein L1 is also a translational repressor protein, it controls the translation of its operon by binding to its mRNA. In Haloquadratum walsbyi (strain DSM 16790 / HBSQ001), this protein is Large ribosomal subunit protein uL1.